The following is a 178-amino-acid chain: Small ribosomal subunit protein uS4 (178 aa).

One can recognise an S4 RNA-binding domain in the interval 104–166 (RRLQTIVFRK…SNSPMASENH (63 aa)). Residues 158–178 (NSPMASENHPERTAATSEENQ) form a disordered region.

It belongs to the universal ribosomal protein uS4 family. In terms of assembly, part of the 30S ribosomal subunit. Contacts protein S5. The interaction surface between S4 and S5 is involved in control of translational fidelity.

Its function is as follows. One of the primary rRNA binding proteins, it binds directly to 16S rRNA where it nucleates assembly of the body of the 30S subunit. With S5 and S12 plays an important role in translational accuracy. This is Small ribosomal subunit protein uS4 from Methanococcus maripaludis (strain DSM 14266 / JCM 13030 / NBRC 101832 / S2 / LL).